A 493-amino-acid chain; its full sequence is Galactose-1-phosphate uridylyltransferase (493 aa).

It belongs to the galactose-1-phosphate uridylyltransferase type 2 family.

The protein localises to the cytoplasm. The enzyme catalyses alpha-D-galactose 1-phosphate + UDP-alpha-D-glucose = alpha-D-glucose 1-phosphate + UDP-alpha-D-galactose. Its pathway is carbohydrate metabolism; galactose metabolism. This chain is Galactose-1-phosphate uridylyltransferase, found in Streptococcus salivarius.